The primary structure comprises 90 residues: Neurotoxin LmNaTx19 (90 aa).

Residues 1–19 (MNHLILIVAMCLMVIGVQC) form the signal peptide. Residues 21–80 (KDGYLYDDVDCKFSCWDNEYCRKLCKSKKAVGGYCWRWRFSCYCTGLPDNEKTEGTYKCG) form the LCN-type CS-alpha/beta domain. 4 disulfides stabilise this stretch: Cys-31-Cys-79, Cys-35-Cys-55, Cys-41-Cys-62, and Cys-45-Cys-64.

This sequence belongs to the long (4 C-C) scorpion toxin superfamily. Sodium channel inhibitor family. Alpha subfamily. Expressed by the venom gland.

The protein localises to the secreted. Functionally, binds voltage-independently at site-3 of voltage-gated sodium channels (Nav) and inhibits the inactivation of the activated channels, thereby blocking neuronal transmission. This Lychas mucronatus (Chinese swimming scorpion) protein is Neurotoxin LmNaTx19.